A 428-amino-acid chain; its full sequence is Elongation factor 1-alpha (428 aa).

The region spanning K5–I217 is the tr-type G domain. Positions G14 to S21 are G1. G14–S21 is a GTP binding site. S21 serves as a coordination point for Mg(2+). Residues G68–D72 are G2. Positions D89–G92 are G3. GTP is bound by residues D89–H93 and N144–D147. Residues N144–D147 form a G4 region. A G5 region spans residues S181–W183.

The protein belongs to the TRAFAC class translation factor GTPase superfamily. Classic translation factor GTPase family. EF-Tu/EF-1A subfamily.

It localises to the cytoplasm. The enzyme catalyses GTP + H2O = GDP + phosphate + H(+). GTP hydrolase that promotes the GTP-dependent binding of aminoacyl-tRNA to the A-site of ribosomes during protein biosynthesis. The polypeptide is Elongation factor 1-alpha (Pyrococcus horikoshii (strain ATCC 700860 / DSM 12428 / JCM 9974 / NBRC 100139 / OT-3)).